The chain runs to 364 residues: Dihydroorotate dehydrogenase (quinone) (364 aa).

Residues 61–65 and S85 contribute to the FMN site; that span reads AGFDK. K65 is a substrate binding site. 110-114 lines the substrate pocket; sequence NRMGF. N139 and N170 together coordinate FMN. Residue N170 coordinates substrate. Catalysis depends on S173, which acts as the Nucleophile. N175 contacts substrate. Residues K214 and S242 each contribute to the FMN site. Residue 243–244 participates in substrate binding; it reads NT. FMN-binding positions include G266, G295, and 316 to 317; that span reads YS.

The protein belongs to the dihydroorotate dehydrogenase family. Type 2 subfamily. As to quaternary structure, monomer. The cofactor is FMN.

The protein resides in the cell membrane. The catalysed reaction is (S)-dihydroorotate + a quinone = orotate + a quinol. It functions in the pathway pyrimidine metabolism; UMP biosynthesis via de novo pathway; orotate from (S)-dihydroorotate (quinone route): step 1/1. Functionally, catalyzes the conversion of dihydroorotate to orotate with quinone as electron acceptor. The protein is Dihydroorotate dehydrogenase (quinone) of Bradyrhizobium sp. (strain BTAi1 / ATCC BAA-1182).